A 675-amino-acid chain; its full sequence is UvrABC system protein B (675 aa).

One can recognise a Helicase ATP-binding domain in the interval 35 to 422 (EGVSDGLMFQ…ADNVVEQVVR (388 aa)). Residue 48–55 (GVTGSGKT) participates in ATP binding. The short motif at 101 to 124 (YYDYYQPEAYVPTRDLFIEKDSSI) is the Beta-hairpin element. One can recognise a Helicase C-terminal domain in the interval 439–605 (QVDDLLGEIH…GVSKAVRELI (167 aa)). A UVR domain is found at 633–668 (AREIRRLEKLMMDHARNLEFEQAAAARDALNALKSR).

It belongs to the UvrB family. In terms of assembly, forms a heterotetramer with UvrA during the search for lesions. Interacts with UvrC in an incision complex.

The protein localises to the cytoplasm. Its function is as follows. The UvrABC repair system catalyzes the recognition and processing of DNA lesions. A damage recognition complex composed of 2 UvrA and 2 UvrB subunits scans DNA for abnormalities. Upon binding of the UvrA(2)B(2) complex to a putative damaged site, the DNA wraps around one UvrB monomer. DNA wrap is dependent on ATP binding by UvrB and probably causes local melting of the DNA helix, facilitating insertion of UvrB beta-hairpin between the DNA strands. Then UvrB probes one DNA strand for the presence of a lesion. If a lesion is found the UvrA subunits dissociate and the UvrB-DNA preincision complex is formed. This complex is subsequently bound by UvrC and the second UvrB is released. If no lesion is found, the DNA wraps around the other UvrB subunit that will check the other stand for damage. The sequence is that of UvrABC system protein B from Bordetella bronchiseptica (strain ATCC BAA-588 / NCTC 13252 / RB50) (Alcaligenes bronchisepticus).